A 423-amino-acid chain; its full sequence is UDP-N-acetylglucosamine 1-carboxyvinyltransferase 1 (423 aa).

24-25 (KN) contributes to the phosphoenolpyruvate binding site. Arg-94 serves as a coordination point for UDP-N-acetyl-alpha-D-glucosamine. Catalysis depends on Cys-118, which acts as the Proton donor. Residue Cys-118 is modified to 2-(S-cysteinyl)pyruvic acid O-phosphothioketal. UDP-N-acetyl-alpha-D-glucosamine-binding positions include 123 to 127 (RPIDQ), Asp-309, and Ile-331.

The protein belongs to the EPSP synthase family. MurA subfamily.

It is found in the cytoplasm. It catalyses the reaction phosphoenolpyruvate + UDP-N-acetyl-alpha-D-glucosamine = UDP-N-acetyl-3-O-(1-carboxyvinyl)-alpha-D-glucosamine + phosphate. The protein operates within cell wall biogenesis; peptidoglycan biosynthesis. Its function is as follows. Cell wall formation. Adds enolpyruvyl to UDP-N-acetylglucosamine. In Staphylococcus haemolyticus (strain JCSC1435), this protein is UDP-N-acetylglucosamine 1-carboxyvinyltransferase 1.